The sequence spans 462 residues: Putative amidase AmiB2 (462 aa).

Active-site charge relay system residues include K81 and S155. The active-site Acyl-ester intermediate is the S179.

Belongs to the amidase family.

The catalysed reaction is a monocarboxylic acid amide + H2O = a monocarboxylate + NH4(+). This Mycobacterium bovis (strain ATCC BAA-935 / AF2122/97) protein is Putative amidase AmiB2 (amiB2).